Here is a 130-residue protein sequence, read N- to C-terminus: Phosphoribosyl-ATP pyrophosphatase (130 aa).

Belongs to the PRA-PH family.

The protein localises to the cytoplasm. It carries out the reaction 1-(5-phospho-beta-D-ribosyl)-ATP + H2O = 1-(5-phospho-beta-D-ribosyl)-5'-AMP + diphosphate + H(+). The protein operates within amino-acid biosynthesis; L-histidine biosynthesis; L-histidine from 5-phospho-alpha-D-ribose 1-diphosphate: step 2/9. This is Phosphoribosyl-ATP pyrophosphatase from Albidiferax ferrireducens (strain ATCC BAA-621 / DSM 15236 / T118) (Rhodoferax ferrireducens).